We begin with the raw amino-acid sequence, 180 residues long: Adenine phosphoribosyltransferase (180 aa).

The residue at position 2 (serine 2) is an N-acetylserine. Phosphoserine is present on residues serine 15 and serine 30. The residue at position 60 (tyrosine 60) is a Phosphotyrosine. Serine 66 is subject to Phosphoserine. Position 114 is an N6-acetyllysine (lysine 114). A Phosphothreonine modification is found at threonine 135.

This sequence belongs to the purine/pyrimidine phosphoribosyltransferase family. Homodimer.

The protein resides in the cytoplasm. It carries out the reaction AMP + diphosphate = 5-phospho-alpha-D-ribose 1-diphosphate + adenine. It functions in the pathway purine metabolism; AMP biosynthesis via salvage pathway; AMP from adenine: step 1/1. In terms of biological role, catalyzes a salvage reaction resulting in the formation of AMP, that is energically less costly than de novo synthesis. This chain is Adenine phosphoribosyltransferase, found in Mastomys natalensis (African soft-furred rat).